The primary structure comprises 560 residues: NAD-dependent malic enzyme (560 aa).

Tyrosine 100 serves as the catalytic Proton donor. Arginine 153 lines the NAD(+) pocket. The Proton acceptor role is filled by lysine 171. The a divalent metal cation site is built by glutamate 242, aspartate 243, and aspartate 266. Residues aspartate 266 and asparagine 413 each coordinate NAD(+).

It belongs to the malic enzymes family. Homotetramer. Mg(2+) is required as a cofactor. Mn(2+) serves as cofactor.

It carries out the reaction (S)-malate + NAD(+) = pyruvate + CO2 + NADH. The enzyme catalyses oxaloacetate + H(+) = pyruvate + CO2. The chain is NAD-dependent malic enzyme from Psychrobacter arcticus (strain DSM 17307 / VKM B-2377 / 273-4).